The chain runs to 473 residues: Probable lipid II flippase MurJ (473 aa).

13 helical membrane-spanning segments follow: residues 31-51 (TFGASSTLDAYYVSIVFPFFL), 90-110 (LVTLLIVFLSEVFPYFMASIF), 125-145 (LIRLTAPFITIVFVWAVFYSV), 153-173 (FLPALTPMFSNVGVIVGCLFG), 177-197 (WAAAGFTIGGLAALLVLLPFG), 215-235 (FFGTFMTMAVSQVTTLIDVNV), 253-273 (LYQLPLGIFGVAVSTVALSTL), 300-320 (IGLMALSERIISLLFGYGAFT), 327-347 (SAQILFMYAIGLCFVSLFNLL), 360-380 (PFFATLLVSAVNISLDVILGF), 382-402 (MGASGIALATSVSYIAGFVFL), 414-434 (IFKISLASAVMGTVILLLRGS), and 439-459 (LGTIFLVLIGVFVYVLFSKLL).

The protein belongs to the MurJ/MviN family.

The protein resides in the cell inner membrane. It functions in the pathway cell wall biogenesis; peptidoglycan biosynthesis. Its function is as follows. Involved in peptidoglycan biosynthesis. Transports lipid-linked peptidoglycan precursors from the inner to the outer leaflet of the cytoplasmic membrane. The protein is Probable lipid II flippase MurJ of Thermotoga maritima (strain ATCC 43589 / DSM 3109 / JCM 10099 / NBRC 100826 / MSB8).